Here is a 327-residue protein sequence, read N- to C-terminus: Phosphoenolpyruvate transferase (327 aa).

Aspartate 59 serves as a coordination point for 7,8-didemethyl-8-hydroxy-5-deazariboflavin.

The protein belongs to the CofD family. Homodimer. The cofactor is Mg(2+).

The enzyme catalyses enolpyruvoyl-2-diphospho-5'-guanosine + 7,8-didemethyl-8-hydroxy-5-deazariboflavin = dehydro coenzyme F420-0 + GMP + H(+). Its pathway is cofactor biosynthesis; coenzyme F420 biosynthesis. Functionally, catalyzes the transfer of the phosphoenolpyruvate moiety from enoylpyruvoyl-2-diphospho-5'-guanosine (EPPG) to 7,8-didemethyl-8-hydroxy-5-deazariboflavin (FO) with the formation of dehydro coenzyme F420-0 and GMP. The protein is Phosphoenolpyruvate transferase of Mycolicibacterium smegmatis (strain ATCC 700084 / mc(2)155) (Mycobacterium smegmatis).